Consider the following 2472-residue polypeptide: Highly reducing polyketide synthase xilA (2472 aa).

In terms of domain architecture, Ketosynthase family 3 (KS3) spans 1–417 (MPGGVRDLPA…GTNGHCIIDD (417 aa)). Residues Cys162, His298, and His340 each act as for beta-ketoacyl synthase activity in the active site. Residues 442–502 (NDINGKSGTN…QRKHHHPKTD (61 aa)) form a disordered region. The segment covering 450-489 (TNGANGANRVNGVNGVNGVNGVNGANGHSNASLLSNGSNN) has biased composition (low complexity). Residues 597–932 (FIFTGQGAQW…CTGTLFVHNV (336 aa)) form the Malonyl-CoA:ACP transacylase (MAT) domain. Residues 991–1129 (HDLLGSKVPG…GQIKVEVAKF (139 aa)) are N-terminal hotdog fold. The PKS/mFAS DH domain maps to 991–1294 (HDLLGSKVPG…FTSLNNEQES (304 aa)). Catalysis depends on His1023, which acts as the Proton acceptor; for dehydratase activity. Positions 1141-1294 (GRLVDAQTWY…FTSLNNEQES (154 aa)) are C-terminal hotdog fold. The Proton donor; for dehydratase activity role is filled by Asp1207. The segment at 1289 to 1505 (NNEQESPSTG…IITVHALRSI (217 aa)) is methyltransferase (CMeT) domain. The region spanning 1724–2036 (GLLTSLYFKP…KGTHIGKMVI (313 aa)) is the Enoyl reductase (ER) domain. A Ketoreductase (KR) domain is found at 2060 to 2239 (ASYILVGGLS…ATTVSLGFIK (180 aa)). Residues 2391-2469 (ETVKLVSDAI…SIARVIVEEA (79 aa)) enclose the Carrier domain. The residue at position 2428 (Ser2428) is an O-(pantetheine 4'-phosphoryl)serine.

It depends on pantetheine 4'-phosphate as a cofactor.

The protein operates within secondary metabolite biosynthesis. Functionally, highly reducing polyketide synthase; part of the gene cluster that mediates the biosynthesis of the 6-methyl-2-pyrone derivative xylariolide D. XilA produces the 5-alkyl-6-methyl-2-pyrone backbone called prexylariolide D via sequential condensations of 4 malonyl-CoA units with one acetyl-CoA starter unit. During the biosynthesis, the linear polyketide chain is branched by the addition of an acetyl unit as the origin of the methyl group at the 2-pyrone ring. Prexylariolide D is then hydroxylated at the side chain by xilC to form the final product, xylariolide D. The sequence is that of Highly reducing polyketide synthase xilA from Penicillium crustosum (Blue mold fungus).